We begin with the raw amino-acid sequence, 354 residues long: Ornithine cyclodeaminase (354 aa).

The L-ornithine site is built by Arg53 and Lys77. NAD(+) is bound by residues Thr92, Arg120, Ala147–Gln148, Asp169, Thr209, Val232–Asp235, Lys239, and Ser300. Arg120 is an L-ornithine binding site. Asp235 provides a ligand contact to L-ornithine. The active-site Proton donor/acceptor is the Asp235. Val301 contributes to the L-ornithine binding site.

The protein belongs to the ornithine cyclodeaminase/mu-crystallin family. NAD(+) is required as a cofactor.

It carries out the reaction L-ornithine = L-proline + NH4(+). It functions in the pathway amino-acid biosynthesis; L-proline biosynthesis; L-proline from L-ornithine: step 1/1. Is subject to substrate inhibition. Is regulated by L-arginine, which stimulates enzymatic activity at 0.1-1 mM while inhibits activity at higher concentrations, and has pronounced effects on the optima for pH and temperature and on the Km for L-ornithine. Is not inhibited by L-proline. In terms of biological role, catalyzes the conversion of L-ornithine into L-proline with release of ammonia. Is involved in the utilization of nopaline, a catabolic pathway that proceeds through L-arginine and L-ornithine to L-proline. Nopaline is a predominant opine in plant cells transformed with Ti plasmid pTiC58. This Agrobacterium fabrum (strain C58 / ATCC 33970) (Agrobacterium tumefaciens (strain C58)) protein is Ornithine cyclodeaminase.